The chain runs to 309 residues: Curved DNA-binding protein (309 aa).

Residues 5–69 (DYYAILGVKP…ERRAEYDQLR (65 aa)) form the J domain.

The protein localises to the cytoplasm. Its subcellular location is the nucleoid. Its function is as follows. DNA-binding protein that preferentially recognizes a curved DNA sequence. It is probably a functional analog of DnaJ; displays overlapping activities with DnaJ, but functions under different conditions, probably acting as a molecular chaperone in an adaptive response to environmental stresses other than heat shock. Lacks autonomous chaperone activity; binds native substrates and targets them for recognition by DnaK. Its activity is inhibited by the binding of CbpM. This Serratia proteamaculans (strain 568) protein is Curved DNA-binding protein.